A 287-amino-acid polypeptide reads, in one-letter code: Protease HtpX (287 aa).

The next 2 helical transmembrane spans lie at 4–24 (IFLL…VMSI) and 33–53 (GGLL…SLAI). H139 contacts Zn(2+). E140 is a catalytic residue. A Zn(2+)-binding site is contributed by H143. 2 helical membrane-spanning segments follow: residues 154–174 (LIQG…AGII) and 195–215 (AVVF…VAYF). Zn(2+) is bound at residue E220.

It belongs to the peptidase M48B family. Requires Zn(2+) as cofactor.

The protein resides in the cell inner membrane. This Shewanella oneidensis (strain ATCC 700550 / JCM 31522 / CIP 106686 / LMG 19005 / NCIMB 14063 / MR-1) protein is Protease HtpX.